A 132-amino-acid chain; its full sequence is Replication enhancer protein (132 aa).

It belongs to the geminiviridae replication enhancer protein family. In terms of assembly, homooligomer. Interacts with the replication-associated protein (REP). Interacts with host proliferating cell nuclear antigen (PCNA). Interacts with host retinoblastoma-related protein 1 (RBR1), and may thereby deregulate the host cell cycle. Oligomerization and interaction with PCNA are necessary for optimal replication enhancement.

Functionally, increases viral DNA accumulation. Enhances infectivity and symptom expression. The polypeptide is Replication enhancer protein (Pepper huasteco yellow vein virus (PHYVV)).